The following is a 347-amino-acid chain: 4-hydroxy-2-oxovalerate aldolase 1 (347 aa).

The Pyruvate carboxyltransferase domain maps to 11–263 (VVLHDMCLRD…ETGVDLFKLM (253 aa)). Position 19-20 (19-20 (RD)) interacts with substrate. Aspartate 20 provides a ligand contact to Mn(2+). The active-site Proton acceptor is histidine 23. The substrate site is built by serine 173 and histidine 202. Mn(2+) contacts are provided by histidine 202 and histidine 204. Residue tyrosine 293 coordinates substrate.

The protein belongs to the 4-hydroxy-2-oxovalerate aldolase family.

The catalysed reaction is (S)-4-hydroxy-2-oxopentanoate = acetaldehyde + pyruvate. This chain is 4-hydroxy-2-oxovalerate aldolase 1 (lapG), found in Azoarcus sp. (strain BH72).